A 493-amino-acid polypeptide reads, in one-letter code: 3-octaprenyl-4-hydroxybenzoate carboxy-lyase (493 aa).

Asn-172 contacts Mn(2+). Prenylated FMN-binding positions include 175 to 177 (IYR), 189 to 191 (RWL), and 194 to 195 (RG). Glu-238 is a Mn(2+) binding site. Residue Asp-287 is the Proton donor of the active site.

Belongs to the UbiD family. In terms of assembly, homohexamer. Prenylated FMN is required as a cofactor. The cofactor is Mn(2+).

The protein resides in the cell membrane. The catalysed reaction is a 4-hydroxy-3-(all-trans-polyprenyl)benzoate + H(+) = a 2-(all-trans-polyprenyl)phenol + CO2. The protein operates within cofactor biosynthesis; ubiquinone biosynthesis. In terms of biological role, catalyzes the decarboxylation of 3-octaprenyl-4-hydroxy benzoate to 2-octaprenylphenol, an intermediate step in ubiquinone biosynthesis. This Shewanella baltica (strain OS155 / ATCC BAA-1091) protein is 3-octaprenyl-4-hydroxybenzoate carboxy-lyase.